The following is a 214-amino-acid chain: ATP phosphoribosyltransferase (214 aa).

This sequence belongs to the ATP phosphoribosyltransferase family. Short subfamily. Heteromultimer composed of HisG and HisZ subunits.

The protein localises to the cytoplasm. It catalyses the reaction 1-(5-phospho-beta-D-ribosyl)-ATP + diphosphate = 5-phospho-alpha-D-ribose 1-diphosphate + ATP. The protein operates within amino-acid biosynthesis; L-histidine biosynthesis; L-histidine from 5-phospho-alpha-D-ribose 1-diphosphate: step 1/9. In terms of biological role, catalyzes the condensation of ATP and 5-phosphoribose 1-diphosphate to form N'-(5'-phosphoribosyl)-ATP (PR-ATP). Has a crucial role in the pathway because the rate of histidine biosynthesis seems to be controlled primarily by regulation of HisG enzymatic activity. This chain is ATP phosphoribosyltransferase, found in Deinococcus deserti (strain DSM 17065 / CIP 109153 / LMG 22923 / VCD115).